The following is an 818-amino-acid chain: Rho GTPase-activating protein 44 (818 aa).

One can recognise a BAR domain in the interval 14 to 249 (QTVGRAEKTE…IKAQQEAWVE (236 aa)). A Rho-GAP domain is found at 255–445 (KPLEEHLTIS…PIIQHADWFF (191 aa)). Disordered stretches follow at residues 467-493 (ANYS…RPLS), 530-772 (SSAG…SMST), and 789-818 (TLRL…STAL). A compositionally biased stretch (basic and acidic residues) spans 479–489 (PADRRQPEQAR). Residue serine 493 is modified to Phosphoserine. Positions 563–579 (QPLDSPAAPALSPSGLG) are enriched in low complexity. Residues 598 to 611 (GSAQKGSPGSSQGT) show a composition bias toward polar residues. Low complexity-rich tracts occupy residues 614 to 641 (AGTQ…DQSP) and 688 to 708 (SPYG…LSPA). Residues 731–818 (KPRQRPTLPP…SEEESESTAL (88 aa)) are interaction with BST2. The span at 746–757 (VNLSASSPQSTE) shows a compositional bias: polar residues. The short motif at 764–767 (MSPG) is the PDZ-binding element. The span at 794 to 809 (PLEHMRRHSVTDKRDS) shows a compositional bias: basic and acidic residues. A Phosphoserine modification is found at serine 809. Positions 815 to 818 (STAL) match the PDZ-binding motif.

In terms of assembly, interacts with BST2 (via cytoplasmic domain). Interacts (probably via PDZ-binding motif) with SHANK3 (via PDZ domain); the interaction takes place in dendritic spines and promotes GRIA1 exocytosis. In terms of tissue distribution, highly expressed in brain. Expressed at weak level in other tissues.

The protein resides in the cell projection. The protein localises to the dendritic spine. It localises to the recycling endosome. It is found in the presynapse. Its subcellular location is the dendrite. Functionally, GTPase-activating protein (GAP) that stimulates the GTPase activity of Rho-type GTPases. Thereby, controls Rho-type GTPases cycling between their active GTP-bound and inactive GDP-bound states. Acts as a GAP at least for CDC42 and RAC1. In neurons, is involved in dendritic spine formation and synaptic plasticity in a specific RAC1-GAP activity. Limits the initiation of exploratory dendritic filopodia. Recruited to actin-patches that seed filopodia, binds specifically to plasma membrane sections that are deformed inward by acto-myosin mediated contractile forces. Acts through GAP activity on RAC1 to reduce actin polymerization necessary for filopodia formation. In association with SHANK3, promotes GRIA1 exocytosis from recycling endosomes and spine morphological changes associated to long-term potentiation. The polypeptide is Rho GTPase-activating protein 44 (Homo sapiens (Human)).